The primary structure comprises 75 residues: Small ribosomal subunit protein bS18 (75 aa).

Belongs to the bacterial ribosomal protein bS18 family. In terms of assembly, part of the 30S ribosomal subunit. Forms a tight heterodimer with protein bS6.

Its function is as follows. Binds as a heterodimer with protein bS6 to the central domain of the 16S rRNA, where it helps stabilize the platform of the 30S subunit. This chain is Small ribosomal subunit protein bS18, found in Acinetobacter baylyi (strain ATCC 33305 / BD413 / ADP1).